A 602-amino-acid chain; its full sequence is Prostaglandin G/H synthase 1 (602 aa).

The signal sequence occupies residues 1 to 26 (MSRRSLSLWFPLLLLLLLPPTPSVLL). The region spanning 34–72 (PVNPCCYYPCQNQGVCVRFGLDNYQCDCTRTGYSGPNCT) is the EGF-like domain. 4 cysteine pairs are disulfide-bonded: Cys38–Cys49, Cys39–Cys161, Cys43–Cys59, and Cys61–Cys71. Asn70, Asn106, and Asn146 each carry an N-linked (GlcNAc...) asparagine glycan. His209 (proton acceptor) is an active-site residue. Tyr387 functions as the For cyclooxygenase activity in the catalytic mechanism. A heme b-binding site is contributed by His390. Cys571 and Cys577 are disulfide-bonded.

It belongs to the prostaglandin G/H synthase family. Homodimer. It depends on heme b as a cofactor.

It localises to the microsome membrane. Its subcellular location is the endoplasmic reticulum membrane. The catalysed reaction is (5Z,8Z,11Z,14Z)-eicosatetraenoate + AH2 + 2 O2 = prostaglandin H2 + A + H2O. It carries out the reaction (5Z,8Z,11Z,14Z)-eicosatetraenoate + 2 O2 = prostaglandin G2. It catalyses the reaction prostaglandin G2 + AH2 = prostaglandin H2 + A + H2O. The enzyme catalyses (9Z,12Z)-octadecadienoate + AH2 + O2 = (9R)-hydroxy-(10E,12Z)-octadecadienoate + A + H2O. The catalysed reaction is (9Z,12Z)-octadecadienoate + AH2 + O2 = (9S)-hydroxy-(10E,12Z)-octadecadienoate + A + H2O. It carries out the reaction (9Z,12Z)-octadecadienoate + AH2 + O2 = (13S)-hydroxy-(9Z,11E)-octadecadienoate + A + H2O. It catalyses the reaction (9Z,12Z)-octadecadienoate + AH2 + O2 = (13R)-hydroxy-(9Z,11E)-octadecadienoate + A + H2O. It functions in the pathway lipid metabolism; prostaglandin biosynthesis. Its activity is regulated as follows. The cyclooxygenase activity is inhibited by nonsteroidal anti-inflammatory drugs (NSAIDs) including ibuprofen, flurbiprofen, ketoprofen, naproxen, flurbiprofen, anirolac, fenclofenac and diclofenac. Functionally, dual cyclooxygenase and peroxidase that plays an important role in the biosynthesis pathway of prostanoids, a class of C20 oxylipins mainly derived from arachidonate ((5Z,8Z,11Z,14Z)-eicosatetraenoate, AA, C20:4(n-6)), with a particular role in the inflammatory response. The cyclooxygenase activity oxygenates AA to the hydroperoxy endoperoxide prostaglandin G2 (PGG2), and the peroxidase activity reduces PGG2 to the hydroxy endoperoxide prostaglandin H2 (PGH2), the precursor of all 2-series prostaglandins and thromboxanes. This complex transformation is initiated by abstraction of hydrogen at carbon 13 (with S-stereochemistry), followed by insertion of molecular O2 to form the endoperoxide bridge between carbon 9 and 11 that defines prostaglandins. The insertion of a second molecule of O2 (bis-oxygenase activity) yields a hydroperoxy group in PGG2 that is then reduced to PGH2 by two electrons. Involved in the constitutive production of prostanoids in particular in the stomach and platelets. In gastric epithelial cells, it is a key step in the generation of prostaglandins, such as prostaglandin E2 (PGE2), which plays an important role in cytoprotection. In platelets, it is involved in the generation of thromboxane A2 (TXA2), which promotes platelet activation and aggregation, vasoconstriction and proliferation of vascular smooth muscle cells. Can also use linoleate (LA, (9Z,12Z)-octadecadienoate, C18:2(n-6)) as substrate and produce hydroxyoctadecadienoates (HODEs) in a regio- and stereospecific manner, being (9R)-HODE ((9R)-hydroxy-(10E,12Z)-octadecadienoate) and (13S)-HODE ((13S)-hydroxy-(9Z,11E)-octadecadienoate) its major products. The protein is Prostaglandin G/H synthase 1 of Mus musculus (Mouse).